Consider the following 394-residue polypeptide: Tyrosine--tRNA ligase, cytoplasmic (394 aa).

Ser2 is subject to N-acetylserine. Tyr43 serves as a coordination point for L-tyrosine. Positions 48-56 (PTGRPHCGY) match the 'HIGH' region motif. Positions 170, 174, 177, and 192 each coordinate L-tyrosine. The 'KMSKS' region motif lies at 227-231 (KMSAS). Ser235 carries the phosphoserine modification. Positions 348–394 (QEASEKGYPVATPQKSKKAKKPKNKGTKYPGATKTNEIATKLEETKL) are disordered. Phosphothreonine is present on Thr359. Residues 360 to 378 (PQKSKKAKKPKNKGTKYPG) carry the Nuclear localization signal motif. The span at 362 to 373 (KSKKAKKPKNKG) shows a compositional bias: basic residues.

The protein belongs to the class-I aminoacyl-tRNA synthetase family. In terms of assembly, homodimer. Interacts with KNR4/SMI1.

The protein resides in the cytoplasm. It localises to the nucleus. It catalyses the reaction tRNA(Tyr) + L-tyrosine + ATP = L-tyrosyl-tRNA(Tyr) + AMP + diphosphate + H(+). Inhibited by N-ethylmaleimide and p-chloromercuribenzoate. Catalyzes the attachment of L-tyrosine to tRNA(Tyr) in a two-step reaction: L-tyrosine is first activated by ATP to form Tyr-AMP and then transferred to the acceptor end of tRNA(Tyr). The specificity determinants on tRNA(Tyr) are the base pair C1-G72, the discriminator residue A73, and the three anticodon bases G34, U35 and A36. Also involved in nuclear tRNA export. Also attaches D-Tyr to tRNA(Tyr), this reaction is about 150-fold less efficient than attachment of L-Tyr. This is Tyrosine--tRNA ligase, cytoplasmic from Saccharomyces cerevisiae (strain ATCC 204508 / S288c) (Baker's yeast).